The following is a 313-amino-acid chain: Calcium homeostasis modulator protein 6 (313 aa).

Over 1-21 (MEKFKAVLDLQRKHRNALGYS) the chain is Cytoplasmic. The helical transmembrane segment at 22–37 (LVTLLTAGGEKIFSSV) threads the bilayer. Over 38–46 (VFQCPCTAT) the chain is Extracellular. 3 disulfides stabilise this stretch: cysteine 41/cysteine 125, cysteine 43/cysteine 154, and cysteine 138/cysteine 145. A helical membrane pass occupies residues 47–68 (WNLPYGLVFLLVPALALFLLGY). Residues 69–101 (ALSARTWRLLTGCCSRSARFSSGLRSAFVCAQL) are Cytoplasmic-facing. Residues 102–126 (SMTAAFAPLTWVAVALLEGSFYQCA) traverse the membrane as a helical segment. Topologically, residues 127–167 (VSGSARLAPYLCKGRDPNCNATLPQAPCNKQKVEMQEILSQ) are extracellular. A helical transmembrane segment spans residues 168 to 190 (LKAQSQVFGWILIAAVIILLLLV). Residues 191–313 (KSVTRCFSPV…DMSMTNTHEL (123 aa)) lie on the Cytoplasmic side of the membrane.

This sequence belongs to the CALHM family. In terms of assembly, oligomerizes to form decameric and undecameric channels. In terms of processing, N-glycosylated. Immune cells in primary and secondary lymphoid organs.

The protein localises to the cell membrane. It catalyses the reaction ATP(in) = ATP(out). Its activity is regulated as follows. Inhibited by Gd(3+). Partially inhibited by divalent ions Ca(2+) and Ba(2+). Its function is as follows. Pore-forming subunit of an ATP-permeable channel. In response to pathogen-derived and proinflammatory stimuli, relocates from intracellular compartments to NK-dendritic cell and NK-macrophage immune synapses where it mediates ATP efflux and NK cell activation involved in antimicrobial and antitumor responses. May assemble to form gap junction channel-like structures with gating and ion conductance likely regulated by membrane lipids and voltage rather than by extracellular calcium levels. This chain is Calcium homeostasis modulator protein 6, found in Mus musculus (Mouse).